Reading from the N-terminus, the 218-residue chain is Protein N-lysine methyltransferase METTL21A (218 aa).

S-adenosyl-L-methionine contacts are provided by residues W47, 73–75 (GAG), D94, W125, and A143.

Belongs to the methyltransferase superfamily. METTL21 family. Interacts with heat shock 70 family members; at least some of these proteins are methylation substrates.

Its subcellular location is the cytoplasm. It carries out the reaction L-lysyl-[protein] + 3 S-adenosyl-L-methionine = N(6),N(6),N(6)-trimethyl-L-lysyl-[protein] + 3 S-adenosyl-L-homocysteine + 3 H(+). Functionally, protein-lysine methyltransferase that selectively trimethylates residues in heat shock protein 70 (HSP70) family members. Contributes to the in vivo trimethylation of Lys residues in HSPA1 and HSPA8. In vitro methylates 'Lys-561' in HSPA1, 'Lys-564' in HSPA2, 'Lys-585' in HSPA5, 'Lys-563' in HSPA6 and 'Lys-561' in HSPA8. The polypeptide is Protein N-lysine methyltransferase METTL21A (METTL21A) (Bos taurus (Bovine)).